Here is a 130-residue protein sequence, read N- to C-terminus: Large ribosomal subunit protein bL17 (130 aa).

This sequence belongs to the bacterial ribosomal protein bL17 family. In terms of assembly, part of the 50S ribosomal subunit. Contacts protein L32.

This Photorhabdus laumondii subsp. laumondii (strain DSM 15139 / CIP 105565 / TT01) (Photorhabdus luminescens subsp. laumondii) protein is Large ribosomal subunit protein bL17.